The following is a 443-amino-acid chain: ATP-dependent protease ATPase subunit HslU (443 aa).

ATP is bound by residues isoleucine 18, 60 to 65 (GVGKTE), aspartate 256, glutamate 321, and arginine 393.

It belongs to the ClpX chaperone family. HslU subfamily. A double ring-shaped homohexamer of HslV is capped on each side by a ring-shaped HslU homohexamer. The assembly of the HslU/HslV complex is dependent on binding of ATP.

The protein localises to the cytoplasm. Functionally, ATPase subunit of a proteasome-like degradation complex; this subunit has chaperone activity. The binding of ATP and its subsequent hydrolysis by HslU are essential for unfolding of protein substrates subsequently hydrolyzed by HslV. HslU recognizes the N-terminal part of its protein substrates and unfolds these before they are guided to HslV for hydrolysis. The sequence is that of ATP-dependent protease ATPase subunit HslU from Vibrio cholerae serotype O1 (strain ATCC 39315 / El Tor Inaba N16961).